Consider the following 343-residue polypeptide: L-lysine cyclodeaminase (343 aa).

Belongs to the ornithine cyclodeaminase/mu-crystallin family. NAD(+) serves as cofactor.

The catalysed reaction is L-lysine = L-pipecolate + NH4(+). Its pathway is antibiotic biosynthesis. With respect to regulation, inhibited by nipecotic acid and thiazolidine-2-carboxylic acid. In terms of biological role, converts L-lysine to L-pipecolate, which is incorporated into multiple secondary metabolite products, including rapamycin, tobulysin, virginiamycin and pristinamycin. In Streptomyces rapamycinicus (strain ATCC 29253 / DSM 41530 / NRRL 5491 / AYB-994) (Streptomyces hygroscopicus (strain ATCC 29253)), this protein is L-lysine cyclodeaminase (rapL).